A 377-amino-acid chain; its full sequence is Probable protein phosphatase 2C 7 (377 aa).

Disordered stretches follow at residues 1 to 68 (MAAH…GKAA) and 80 to 99 (TTVA…EDDE). The span at 21–39 (PPAAEAEAAAAAAAIARAA) shows a compositional bias: low complexity. Over residues 51–63 (GVRHPLKHRRFRA) the composition is skewed to basic residues. The span at 80–89 (TTVAEATATG) shows a compositional bias: low complexity. The 247-residue stretch at 115-361 (SCGYSSFRGR…DNITCIVVKF (247 aa)) folds into the PPM-type phosphatase domain. Aspartate 151, glycine 152, aspartate 313, and aspartate 352 together coordinate Mn(2+).

It belongs to the PP2C family. The cofactor is Mg(2+). Mn(2+) serves as cofactor.

It carries out the reaction O-phospho-L-seryl-[protein] + H2O = L-seryl-[protein] + phosphate. The catalysed reaction is O-phospho-L-threonyl-[protein] + H2O = L-threonyl-[protein] + phosphate. The chain is Probable protein phosphatase 2C 7 from Oryza sativa subsp. japonica (Rice).